A 96-amino-acid chain; its full sequence is (4S)-4-hydroxy-5-phosphonooxypentane-2,3-dione isomerase (96 aa).

The ABM domain maps to histidine 2 to phenylalanine 91.

It belongs to the LsrG family. Homodimer.

The protein localises to the cytoplasm. It carries out the reaction (2S)-2-hydroxy-3,4-dioxopentyl phosphate = 3-hydroxy-2,4-dioxopentyl phosphate. Functionally, involved in the degradation of phospho-AI-2, thereby terminating induction of the lsr operon and closing the AI-2 signaling cycle. Catalyzes the conversion of (4S)-4-hydroxy-5-phosphonooxypentane-2,3-dione (P-DPD) to 3-hydroxy-5-phosphonooxypentane-2,4-dione (P-HPD). This Shigella flexneri serotype 5b (strain 8401) protein is (4S)-4-hydroxy-5-phosphonooxypentane-2,3-dione isomerase.